Reading from the N-terminus, the 80-residue chain is DinI-like protein Z2083/ECs2153 (80 aa).

The chain is DinI-like protein Z2083/ECs2153 from Escherichia coli O157:H7.